We begin with the raw amino-acid sequence, 274 residues long: Probable ribosomal RNA small subunit methyltransferase A (274 aa).

H22, L24, G50, E71, D99, and N114 together coordinate S-adenosyl-L-methionine.

Belongs to the class I-like SAM-binding methyltransferase superfamily. rRNA adenine N(6)-methyltransferase family. RsmA subfamily.

It is found in the cytoplasm. Specifically dimethylates two adjacent adenosines in the loop of a conserved hairpin near the 3'-end of 16S rRNA in the 30S particle. May play a critical role in biogenesis of 30S subunits. The polypeptide is Probable ribosomal RNA small subunit methyltransferase A (Natronomonas pharaonis (strain ATCC 35678 / DSM 2160 / CIP 103997 / JCM 8858 / NBRC 14720 / NCIMB 2260 / Gabara) (Halobacterium pharaonis)).